Reading from the N-terminus, the 183-residue chain is TATA-box-binding protein 2 (183 aa).

2 consecutive repeat copies span residues 8-84 (IENV…AKKL) and 99-177 (VQNI…RQQL).

The protein belongs to the TBP family.

In terms of biological role, general factor that plays a role in the activation of archaeal genes transcribed by RNA polymerase. Binds specifically to the TATA box promoter element which lies close to the position of transcription initiation. The protein is TATA-box-binding protein 2 of Methanosarcina mazei (strain ATCC BAA-159 / DSM 3647 / Goe1 / Go1 / JCM 11833 / OCM 88) (Methanosarcina frisia).